The chain runs to 184 residues: MADTQTLLQNFGQVYDNPVLLDRSVTAPVTEGLNVLLASFQALYLQYQKHHFVVEGAEFYSLHEFFNSSYNEVQDHVHEIGERLNGLGGVPAASFSKLAELTCFEQESDGVYSSRKMVENDLAAEQAIINVIRRQAAQAESLGDRGTRYLYEKILLKTEERAYHLAHFLAKDSLTLGFVQPAQN.

This sequence belongs to the Dps family. In terms of assembly, hexamer.

Its function is as follows. Involved in protection of chromosomal DNA from damage under nutrient-limited and oxidative stress conditions. Binds heme. This Nostoc sp. (strain PCC 7120 / SAG 25.82 / UTEX 2576) protein is Nutrient stress-induced DNA-binding protein (dpsA).